A 113-amino-acid chain; its full sequence is Small ribosomal subunit protein eS24 (113 aa).

This sequence belongs to the eukaryotic ribosomal protein eS24 family.

In Metallosphaera sedula (strain ATCC 51363 / DSM 5348 / JCM 9185 / NBRC 15509 / TH2), this protein is Small ribosomal subunit protein eS24.